We begin with the raw amino-acid sequence, 228 residues long: 2-C-methyl-D-erythritol 4-phosphate cytidylyltransferase (228 aa).

It belongs to the IspD/TarI cytidylyltransferase family. IspD subfamily.

The enzyme catalyses 2-C-methyl-D-erythritol 4-phosphate + CTP + H(+) = 4-CDP-2-C-methyl-D-erythritol + diphosphate. It participates in isoprenoid biosynthesis; isopentenyl diphosphate biosynthesis via DXP pathway; isopentenyl diphosphate from 1-deoxy-D-xylulose 5-phosphate: step 2/6. Its function is as follows. Catalyzes the formation of 4-diphosphocytidyl-2-C-methyl-D-erythritol from CTP and 2-C-methyl-D-erythritol 4-phosphate (MEP). In Dechloromonas aromatica (strain RCB), this protein is 2-C-methyl-D-erythritol 4-phosphate cytidylyltransferase.